The chain runs to 163 residues: Cyclic pyranopterin monophosphate synthase (163 aa).

Residues leucine 75 to histidine 77 and methionine 113 to glutamate 114 contribute to the substrate site. Aspartate 128 is a catalytic residue.

The protein belongs to the MoaC family. As to quaternary structure, homohexamer; trimer of dimers.

The enzyme catalyses (8S)-3',8-cyclo-7,8-dihydroguanosine 5'-triphosphate = cyclic pyranopterin phosphate + diphosphate. Its pathway is cofactor biosynthesis; molybdopterin biosynthesis. Its function is as follows. Catalyzes the conversion of (8S)-3',8-cyclo-7,8-dihydroguanosine 5'-triphosphate to cyclic pyranopterin monophosphate (cPMP). The chain is Cyclic pyranopterin monophosphate synthase from Jannaschia sp. (strain CCS1).